The sequence spans 482 residues: Ribulose bisphosphate carboxylase large chain (482 aa).

Residues 1-2 (MS) constitute a propeptide that is removed on maturation. At P3 the chain carries N-acetylproline. At K14 the chain carries N6,N6,N6-trimethyllysine. Residues N123 and T173 each contribute to the substrate site. The active-site Proton acceptor is K175. Substrate is bound at residue K177. Residues K201, D203, and E204 each coordinate Mg(2+). Position 201 is an N6-carboxylysine (K201). The active-site Proton acceptor is the H294. Residues R295, H327, and S379 each contribute to the substrate site.

The protein belongs to the RuBisCO large chain family. Type I subfamily. In terms of assembly, heterohexadecamer of 8 large chains and 8 small chains; disulfide-linked. The disulfide link is formed within the large subunit homodimers. Requires Mg(2+) as cofactor. The disulfide bond which can form in the large chain dimeric partners within the hexadecamer appears to be associated with oxidative stress and protein turnover.

It localises to the plastid. The protein resides in the chloroplast. The catalysed reaction is 2 (2R)-3-phosphoglycerate + 2 H(+) = D-ribulose 1,5-bisphosphate + CO2 + H2O. It carries out the reaction D-ribulose 1,5-bisphosphate + O2 = 2-phosphoglycolate + (2R)-3-phosphoglycerate + 2 H(+). In terms of biological role, ruBisCO catalyzes two reactions: the carboxylation of D-ribulose 1,5-bisphosphate, the primary event in carbon dioxide fixation, as well as the oxidative fragmentation of the pentose substrate in the photorespiration process. Both reactions occur simultaneously and in competition at the same active site. The chain is Ribulose bisphosphate carboxylase large chain from Stegnosperma halimifolium.